The following is a 712-amino-acid chain: MTTIWEHCVDVDGEVAASTGCFTTLPIRIHRRNDIADDATKQSIHDWGAYVGDGWEQRSGSSWSPVGNWGAFIFPESLPDRLGVITYLANMGNIHDDLCDELPFEEALKEHSNLSQAMEVSNSDTRQCSKASDRSMKMKKYISKCLLEAMEIDRARALRMINSYRSKWLDVMESQNVNDMQTLEEYLAFRNLNGGMEAFWSMVEFGMAIDISESEKTHTRPLFQAAESALVLTNDYWSWDREWRLAQRTQDPRIVNAVHLFMRTEGLSVDQAREKVRERIVDYEREYLRLKEEFYTQNPNLPLYLRRYVEVCGVITAGNHYWCANCPRHHAWRDEESSPSERSFSPSNEGIEDPRLSPGASTTSSMSQKSSPATEITLSDVLGFMAINDNHKPQRSSDMALMAPVQYIRSMPSKGLRSLMVEALDQWLLVDDPELEQIKNIIDLLHNSSLILDDIEDDSPLRRGLPATHTVFGQAQSINSANFMFVQAVQMTQKLNNPASLDTLLDELECLFIGQSWDLYWKFHLQVPTEKEYLEMVDCKTGAMFRLLARLMFHESSVVSGTQVLQLLDEMCRLFGRFFQIRDDFMNLYSTEYSDQKGFCEDLDEGKMSYPLIMLLWQNPGQRDQIMGIFRQQASNTSRGPTSDRSRLPLETKRYVMSLLKGSDIMASTLRKLRDLEAAVDYSISGLEKALGDANPVMRIVLSRLSVRDVSL.

A terpene cyclase region spans residues 1-332 (MTTIWEHCVD…CANCPRHHAW (332 aa)). Mg(2+) is bound at residue Asp96. Residues Asp96, Asn234, 238–242 (SWDRE), and 328–329 (RH) each bind substrate. Residues 96–100 (DDLCD) carry the DDXXD 1 motif. The short motif at 234-242 (NDYWSWDRE) is the NSE/DTE element. Residues 333 to 706 (RDEESSPSER…VMRIVLSRLS (374 aa)) form a prenyltransferase region. Residues 334 to 373 (DEESSPSERSFSPSNEGIEDPRLSPGASTTSSMSQKSSPA) form a disordered region. Composition is skewed to low complexity over residues 340-349 (SERSFSPSNE) and 361-373 (STTS…SSPA). Isopentenyl diphosphate-binding residues include Lys414, Arg417, and His446. Mg(2+) contacts are provided by Asp453 and Asp457. Positions 453–457 (DDIED) match the DDXXD 2 motif. Arg462 is a binding site for dimethylallyl diphosphate. An isopentenyl diphosphate-binding site is contributed by Arg463. 6 residues coordinate dimethylallyl diphosphate: Lys540, Thr541, Gln580, Asn587, Lys597, and Lys607.

This sequence in the N-terminal section; belongs to the terpene synthase family. It in the C-terminal section; belongs to the FPP/GGPP synthase family. Hexamer. Mg(2+) serves as cofactor.

The catalysed reaction is isopentenyl diphosphate + (2E,6E)-farnesyl diphosphate = (2E,6E,10E)-geranylgeranyl diphosphate + diphosphate. It catalyses the reaction isopentenyl diphosphate + (2E,6E,10E)-geranylgeranyl diphosphate = (2E,6E,10E,14E)-geranylfarnesyl diphosphate + diphosphate. Its pathway is secondary metabolite biosynthesis; terpenoid biosynthesis. In terms of biological role, bifunctional terpene synthase; part of the gene cluster that mediates the biosynthesis of betaestacins. The bifunctional terpene synthase btcA converts isopentenyl diphosphate (IPP) and dimethylallyl diphosphate (DMAPP) into the sesterterpene betaestacin I. The C-terminal prenyltransferase (PT) domain of btcA catalyzes formation of GFPP, whereas the N-terminal terpene cyclase (TC) domain catalyzes the cyclization of GFPP into betaestacin I. The cytochrome P450 monooxygenase btcB oxidizes the C25 methyl group of betaestacin I to yield the carboxylic acid betaestacin IV via the alcohol betaestacin III. The cytochrome P450 monooxygenase btcC further catalyzes the multistep oxidation of betaestacin IV to produce several compounds, including betaestacins Va, Vb, Vc and VI. The protein is Sesterterpene synthase btcA of Colletotrichum orbiculare (strain 104-T / ATCC 96160 / CBS 514.97 / LARS 414 / MAFF 240422) (Cucumber anthracnose fungus).